An 86-amino-acid polypeptide reads, in one-letter code: MSLLDYFKSSKKPATAVTAKERLQIIVAHQRGERDAPDYFPQMKQEIIEVIKKYVHIDPEQVSVQLDKNDNKLSVLELNVTLPEKS.

This sequence belongs to the MinE family.

Its function is as follows. Prevents the cell division inhibition by proteins MinC and MinD at internal division sites while permitting inhibition at polar sites. This ensures cell division at the proper site by restricting the formation of a division septum at the midpoint of the long axis of the cell. This Shewanella woodyi (strain ATCC 51908 / MS32) protein is Cell division topological specificity factor.